Reading from the N-terminus, the 428-residue chain is Cholecystokinin receptor type A (428 aa).

Topologically, residues 1–41 (MEVADSLLGNGSDVPPPCELGLENETLVCLEQPRAAKEWQP) are extracellular. 2 N-linked (GlcNAc...) asparagine glycosylation sites follow: asparagine 10 and asparagine 24. An intrachain disulfide couples cysteine 18 to cysteine 29. The helical transmembrane segment at 42 to 67 (AVQILLYSLIFLLSVLGNTLVITVLI) threads the bilayer. At 68–77 (RNKRMRTVTN) the chain is on the cytoplasmic side. The helical transmembrane segment at 78 to 104 (IFLLSLAVSDLMLCLFCMPFNLIPNLL) threads the bilayer. At 105-115 (KDFIFGSAVCK) the chain is on the extracellular side. Cysteine 114 and cysteine 196 are oxidised to a cystine. The chain crosses the membrane as a helical span at residues 116–137 (TTTYFMGTSVSVSTFNLVAISL). Residues 138–157 (ERYGAICKPLQSRVWQTKSH) are Cytoplasmic-facing. Residues 158–178 (ALKVIATTWCLSFTIMTPYPI) form a helical membrane-spanning segment. Topologically, residues 179 to 210 (YSNLVPFTKTNNQTANMCRFLLPNDVMQQSWH) are extracellular. Asparagine 190 carries N-linked (GlcNAc...) asparagine glycosylation. A helical transmembrane segment spans residues 211 to 234 (TFLLLILFLIPGIVMMVAYGLISL). Over 235 to 313 (ELYQGIKFDA…NLMAKKRVIR (79 aa)) the chain is Cytoplasmic. The tract at residues 250–269 (ARDRNPSTGSSGRYEDGDGC) is disordered. A helical membrane pass occupies residues 314–334 (MLMVIVVLFFLCWMPIFSANA). Residues 335–349 (WRAYDTASAERRLSG) are Extracellular-facing. Residues 350 to 373 (TPISFILLLSYTSSCVNPIIYCFM) form a helical membrane-spanning segment. The Cytoplasmic segment spans residues 374–428 (NKRFRLGFLATFPCCPHPGPPGPRGEVGEEEEGRTTGASLSRYSYSHMSASAPGP). A lipid anchor (S-palmitoyl cysteine) is attached at cysteine 387. The interval 393–428 (PPGPRGEVGEEEEGRTTGASLSRYSYSHMSASAPGP) is disordered. Residues 409 to 422 (TGASLSRYSYSHMS) are compositionally biased toward polar residues.

The protein belongs to the G-protein coupled receptor 1 family.

Its subcellular location is the cell membrane. Functionally, receptor for cholecystokinin. Mediates pancreatic growth and enzyme secretion, smooth muscle contraction of the gall bladder and stomach. Has a 1000-fold higher affinity for CCK rather than for gastrin. It modulates feeding and dopamine-induced behavior in the central and peripheral nervous system. This receptor mediates its action by association with G proteins that activate a phosphatidylinositol-calcium second messenger system. The chain is Cholecystokinin receptor type A (CCKAR) from Canis lupus familiaris (Dog).